The primary structure comprises 372 residues: Alanine dehydrogenase 1 (372 aa).

H94 is a catalytic residue. 170-200 contacts NAD(+); the sequence is TYVIFGGGVAATNAANVALGLNAKVIIIELN.

The protein belongs to the AlaDH/PNT family.

The catalysed reaction is L-alanine + NAD(+) + H2O = pyruvate + NH4(+) + NADH + H(+). The protein operates within amino-acid degradation; L-alanine degradation via dehydrogenase pathway; NH(3) and pyruvate from L-alanine: step 1/1. May play a role in cell wall synthesis as L-alanine is an important constituent of the peptidoglycan layer. The polypeptide is Alanine dehydrogenase 1 (ald1) (Staphylococcus aureus (strain MSSA476)).